We begin with the raw amino-acid sequence, 506 residues long: Subtilisin-like serine protease Cur l 4.0101 (506 aa).

Residues 1–15 (MKYSLIAALPALAAA) form the signal peptide. A propeptide spans 16–135 (SPTFSTETIH…IERDSEVRIL (120 aa)) (removed in mature form). One can recognise an Inhibitor I9 domain in the interval 43-134 (SYMVVFKKHV…YIERDSEVRI (92 aa)). Residues 59-79 (HDWVQSVHSKNTQERMELRKR) form a disordered region. Residues 69–79 (NTQERMELRKR) show a composition bias toward basic and acidic residues. Positions 147–453 (PWGLARISHR…GGSSNYTDII (307 aa)) constitute a Peptidase S8 domain. Catalysis depends on charge relay system residues D183 and H215. N-linked (GlcNAc...) asparagine glycans are attached at residues N245 and N285. The Charge relay system role is filled by S381. N-linked (GlcNAc...) asparagine glycosylation occurs at N448. A propeptide spans 459-506 (TVKKAASKEEEKESEFRITIPSLSELEDDFEKAKESAGRKAHHVGGKL) (removed in mature form).

It belongs to the peptidase S8 family.

Its function is as follows. Serine protease. In Cochliobolus lunatus (Filamentous fungus), this protein is Subtilisin-like serine protease Cur l 4.0101.